We begin with the raw amino-acid sequence, 63 residues long: Beta-defensin 4 (63 aa).

The first 22 residues, 1–22 (MRIHYLLFTFLLVLLSPLAAFT), serve as a signal peptide directing secretion. Gln-23 is modified (pyrrolidone carboxylic acid). 3 cysteine pairs are disulfide-bonded: Cys-31–Cys-59, Cys-38–Cys-52, and Cys-42–Cys-60.

Belongs to the beta-defensin family. In terms of tissue distribution, tongue, esophagus and trachea.

The protein resides in the secreted. Its function is as follows. Exhibits antimicrobial activity against Gram-negative bacteria and Gram-positive bacteria. May act as a ligand for C-C chemokine receptor CCR6. Can bind to mouse (but not human) CCR6 and induce chemotactic activity of CCR6-expressing cells. This chain is Beta-defensin 4 (Defb4), found in Mus musculus (Mouse).